The following is a 160-amino-acid chain: Non-secretory ribonuclease (160 aa).

A signal peptide spans 1 to 27 (MVPKLFTSPICLLLLLGLMGVEGSLHA). A glycan (C-linked (Man) tryptophan) is linked at tryptophan 34. Residue histidine 42 is the Proton acceptor of the active site. N-linked (GlcNAc...) asparagine glycosylation occurs at asparagine 44. Cystine bridges form between cysteine 50–cysteine 110, cysteine 64–cysteine 122, cysteine 82–cysteine 137, and cysteine 89–cysteine 98. Position 60 is a 3'-nitrotyrosine (tyrosine 60). A substrate-binding site is contributed by 65 to 69 (KNQNT). Residues asparagine 92, asparagine 111, and asparagine 138 are each glycosylated (N-linked (GlcNAc...) asparagine). Histidine 155 functions as the Proton donor in the catalytic mechanism.

The protein belongs to the pancreatic ribonuclease family. Interacts with and forms a tight 1:1 complex with RNH1. Dimerization of two such complexes may occur.

The protein localises to the lysosome. It localises to the cytoplasmic granule. The enzyme catalyses an [RNA] containing cytidine + H2O = an [RNA]-3'-cytidine-3'-phosphate + a 5'-hydroxy-ribonucleotide-3'-[RNA].. The catalysed reaction is an [RNA] containing uridine + H2O = an [RNA]-3'-uridine-3'-phosphate + a 5'-hydroxy-ribonucleotide-3'-[RNA].. Its function is as follows. This is a non-secretory ribonuclease. It is a pyrimidine specific nuclease with a slight preference for U. Cytotoxin and helminthotoxin. Possesses a wide variety of biological activities. The protein is Non-secretory ribonuclease (RNASE2) of Papio hamadryas (Hamadryas baboon).